Consider the following 331-residue polypeptide: PIN2/TERF1-interacting telomerase inhibitor 1 (331 aa).

Disordered stretches follow at residues 1-28 (MSML…DDSK), 156-175 (AQDG…LTTT), and 197-331 (SKSQ…KVSR). Positions 26–72 (DSKFGQKMLEKMGWSKGKGLGAQEQGATEHIKVKVKNNHLGLGATNN) constitute a G-patch domain. Ser233 bears the Phosphoserine mark. Basic residues predominate over residues 236–246 (HKAKRHKKKKR). The segment covering 247-261 (VEAERGPAAKKRDQV) has biased composition (basic and acidic residues). The segment at 254 to 328 (AAKKRDQVEL…DSAPVKKKKK (75 aa)) is telomerase inhibitory domain (TID). Residues Ser269, Ser274, and Ser277 each carry the phosphoserine modification. A TBM motif is present at residues 291-301 (QDDVPKPRKRR). Positions 297 to 306 (PRKRRAKKTL) are enriched in basic residues.

This sequence belongs to the PINX1 family. As to quaternary structure, interacts with MCRS1, TERT, TERF1, NCL/nucleolin, and the telomerase RNA.

It is found in the nucleus. Its subcellular location is the nucleolus. The protein resides in the chromosome. It localises to the telomere. The protein localises to the centromere. It is found in the kinetochore. Microtubule-binding protein essential for faithful chromosome segregation. Mediates TRF1 and TERT accumulation in nucleolus and enhances TRF1 binding to telomeres. Inhibits telomerase activity. May inhibit cell proliferation and act as tumor suppressor. This Rattus norvegicus (Rat) protein is PIN2/TERF1-interacting telomerase inhibitor 1.